We begin with the raw amino-acid sequence, 247 residues long: PF03932 family protein CutC (247 aa).

Belongs to the CutC family.

It localises to the cytoplasm. The protein is PF03932 family protein CutC of Aliivibrio fischeri (strain MJ11) (Vibrio fischeri).